A 559-amino-acid polypeptide reads, in one-letter code: Glutamine--tRNA ligase (559 aa).

Residues 44 to 54 (PEPNGYLHIGH) carry the 'HIGH' region motif. ATP contacts are provided by residues 45 to 47 (EPN) and 51 to 57 (HIGHAKS). L-glutamine is bound by residues Asp77 and Tyr222. ATP contacts are provided by residues Thr241 and 272 to 273 (RL). A 'KMSKS' region motif is present at residues 279–283 (LTSKR).

The protein belongs to the class-I aminoacyl-tRNA synthetase family. In terms of assembly, monomer.

The protein localises to the cytoplasm. The catalysed reaction is tRNA(Gln) + L-glutamine + ATP = L-glutaminyl-tRNA(Gln) + AMP + diphosphate. The polypeptide is Glutamine--tRNA ligase (Actinobacillus succinogenes (strain ATCC 55618 / DSM 22257 / CCUG 43843 / 130Z)).